Here is a 67-residue protein sequence, read N- to C-terminus: Large ribosomal subunit protein bL31 (67 aa).

Zn(2+) contacts are provided by Cys-16, Cys-18, Cys-37, and Cys-40.

It belongs to the bacterial ribosomal protein bL31 family. Type A subfamily. In terms of assembly, part of the 50S ribosomal subunit. Zn(2+) is required as a cofactor.

Its function is as follows. Binds the 23S rRNA. This is Large ribosomal subunit protein bL31 from Methylococcus capsulatus (strain ATCC 33009 / NCIMB 11132 / Bath).